The chain runs to 72 residues: NADH dehydrogenase [ubiquinone] 1 beta subcomplex subunit 3-A (72 aa).

Residues A31–G48 traverse the membrane as a helical segment.

The protein belongs to the complex I NDUFB3 subunit family. In terms of assembly, complex I is composed of at least 49 different subunits.

The protein resides in the mitochondrion inner membrane. Accessory subunit of the mitochondrial membrane respiratory chain NADH dehydrogenase (Complex I), that is believed not to be involved in catalysis. Complex I functions in the transfer of electrons from NADH to the respiratory chain. The immediate electron acceptor for the enzyme is believed to be ubiquinone. This is NADH dehydrogenase [ubiquinone] 1 beta subcomplex subunit 3-A from Arabidopsis thaliana (Mouse-ear cress).